The following is an 807-amino-acid chain: F-box protein YLR352W (807 aa).

One can recognise an F-box domain in the interval 220–266; it reads LNDCIDLPSHVLWKILKMLPELQKLDLSHTSIDDSTLYHGIPHWKNL. The segment covering 607-616 has biased composition (basic and acidic residues); the sequence is DNNSHVEDSQ. 2 disordered regions span residues 607 to 647 and 716 to 739; these read DNNS…NPFA and HLFE…EHSS. 2 stretches are compositionally biased toward polar residues: residues 627–644 and 723–736; these read SLLS…SSAN and SRSG…LTGE.

In terms of assembly, interacts with SKP1 and CDC53. Component of the probable SCF(YBR352W) complex containing CDC53, SKP1, RBX1 and YBR352W.

The protein operates within protein modification; protein ubiquitination. Functionally, substrate recognition component of a SCF (SKP1-CUL1-F-box protein) E3 ubiquitin-protein ligase complex which mediates the ubiquitination and subsequent proteasomal degradation of target proteins. Probably recognizes and binds to phosphorylated target proteins. This chain is F-box protein YLR352W, found in Saccharomyces cerevisiae (strain ATCC 204508 / S288c) (Baker's yeast).